Here is a 381-residue protein sequence, read N- to C-terminus: Alcohol dehydrogenase class-3 (381 aa).

Residue cysteine 49 coordinates Zn(2+). NAD(+) is bound at residue histidine 50. Threonine 51 and histidine 71 together coordinate an alcohol. Residues histidine 71, glutamate 72, cysteine 101, cysteine 104, cysteine 107, cysteine 115, and cysteine 179 each contribute to the Zn(2+) site. NAD(+)-binding positions include 204-209, aspartate 228, lysine 233, isoleucine 274, 297-299, 322-324, and arginine 374; these read GLGTVG, VGV, and TAF.

This sequence belongs to the zinc-containing alcohol dehydrogenase family. Class-III subfamily. Homodimer. It depends on Zn(2+) as a cofactor. In terms of tissue distribution, expressed at low levels in the leaves.

It localises to the cytoplasm. The catalysed reaction is a primary alcohol + NAD(+) = an aldehyde + NADH + H(+). The enzyme catalyses a secondary alcohol + NAD(+) = a ketone + NADH + H(+). It catalyses the reaction S-(hydroxymethyl)glutathione + NADP(+) = S-formylglutathione + NADPH + H(+). It carries out the reaction S-(hydroxymethyl)glutathione + NAD(+) = S-formylglutathione + NADH + H(+). The protein is Alcohol dehydrogenase class-3 (FDH) of Zea mays (Maize).